Consider the following 640-residue polypeptide: Threonine--tRNA ligase (640 aa).

The TGS domain maps to 1–59; the sequence is MKIKVKLPDGKEKEYDRGITPAEIAKELGIKKAIGAVVNGELWDLKRPIENDCELRLVT. The interval 240 to 531 is catalytic; the sequence is DHRKLGPQLE…LIEHFAGAFP (292 aa). The Zn(2+) site is built by Cys-332, His-383, and His-508.

Belongs to the class-II aminoacyl-tRNA synthetase family. In terms of assembly, homodimer. Zn(2+) serves as cofactor.

Its subcellular location is the cytoplasm. The catalysed reaction is tRNA(Thr) + L-threonine + ATP = L-threonyl-tRNA(Thr) + AMP + diphosphate + H(+). Catalyzes the attachment of threonine to tRNA(Thr) in a two-step reaction: L-threonine is first activated by ATP to form Thr-AMP and then transferred to the acceptor end of tRNA(Thr). Also edits incorrectly charged L-seryl-tRNA(Thr). This chain is Threonine--tRNA ligase, found in Thermotoga maritima (strain ATCC 43589 / DSM 3109 / JCM 10099 / NBRC 100826 / MSB8).